Consider the following 240-residue polypeptide: 2,3,4,5-tetrahydropyridine-2,6-dicarboxylate N-acetyltransferase (240 aa).

Belongs to the transferase hexapeptide repeat family. DapH subfamily.

The catalysed reaction is (S)-2,3,4,5-tetrahydrodipicolinate + acetyl-CoA + H2O = L-2-acetamido-6-oxoheptanedioate + CoA. It functions in the pathway amino-acid biosynthesis; L-lysine biosynthesis via DAP pathway; LL-2,6-diaminopimelate from (S)-tetrahydrodipicolinate (acetylase route): step 1/3. In terms of biological role, catalyzes the transfer of an acetyl group from acetyl-CoA to tetrahydrodipicolinate. The chain is 2,3,4,5-tetrahydropyridine-2,6-dicarboxylate N-acetyltransferase from Shouchella clausii (strain KSM-K16) (Alkalihalobacillus clausii).